Here is a 666-residue protein sequence, read N- to C-terminus: Endogenous retrovirus group K member 9 Gag polyprotein (666 aa).

Residue G2 is the site of N-myristoyl glycine attachment. The interval 165 to 264 (GKGPELVGPS…APPSRQGSEL (100 aa)) is disordered. Residues 232-247 (GMPPAPQGRAPYPQPP) show a composition bias toward pro residues. 2 consecutive CCHC-type zinc fingers follow at residues 544-561 (GKCYNCGQIGHLKKNCPV) and 580-597 (DLCPRCKKGKHWASQCRS). The segment at 598–641 (KFDKNGQPLSGNEQRGQPQAPQQTGAFPIQPFVPQGFQGQQPPL) is disordered. Positions 604 to 622 (QPLSGNEQRGQPQAPQQTG) are enriched in polar residues. Low complexity predominate over residues 624–640 (FPIQPFVPQGFQGQQPP).

Belongs to the beta type-B retroviral Gag protein family. HERV class-II K(HML-2) gag subfamily. Myristoylation is essential for retroviral assembly. Alteration of the glycine residue leads to a block in the budding of particles and an accumulation of Gag inside the cell. Post-translationally, specific enzymatic cleavages may yield mature proteins.

The protein localises to the cell membrane. In terms of biological role, the products of the Gag polyproteins of infectious retroviruses perform highly complex orchestrated tasks during the assembly, budding, maturation, and infection stages of the viral replication cycle. During viral assembly, the proteins form membrane associations and self-associations that ultimately result in budding of an immature virion from the infected cell. Gag precursors also function during viral assembly to selectively bind and package two plus strands of genomic RNA. Endogenous Gag proteins may have kept, lost or modified their original function during evolution. The polypeptide is Endogenous retrovirus group K member 9 Gag polyprotein (ERVK-9) (Homo sapiens (Human)).